A 117-amino-acid polypeptide reads, in one-letter code: NADH-ubiquinone oxidoreductase chain 3 (117 aa).

A run of 3 helical transmembrane segments spans residues 4-24 (FLGILIYFFIALALSLLLLGL), 61-81 (LVAILFIIFDLEVAFLFPWAL), and 86-106 (IGYFGFWSMMLFLFILTVGFI).

This sequence belongs to the complex I subunit 3 family.

The protein resides in the mitochondrion membrane. It catalyses the reaction a ubiquinone + NADH + 5 H(+)(in) = a ubiquinol + NAD(+) + 4 H(+)(out). Core subunit of the mitochondrial membrane respiratory chain NADH dehydrogenase (Complex I) that is believed to belong to the minimal assembly required for catalysis. Complex I functions in the transfer of electrons from NADH to the respiratory chain. The immediate electron acceptor for the enzyme is believed to be ubiquinone. The polypeptide is NADH-ubiquinone oxidoreductase chain 3 (NAD3) (Prototheca wickerhamii).